Here is a 241-residue protein sequence, read N- to C-terminus: tRNA pseudouridine synthase B (241 aa).

Asp45 functions as the Nucleophile in the catalytic mechanism.

The protein belongs to the pseudouridine synthase TruB family. Type 1 subfamily.

It catalyses the reaction uridine(55) in tRNA = pseudouridine(55) in tRNA. Its function is as follows. Responsible for synthesis of pseudouridine from uracil-55 in the psi GC loop of transfer RNAs. This Opitutus terrae (strain DSM 11246 / JCM 15787 / PB90-1) protein is tRNA pseudouridine synthase B.